The chain runs to 703 residues: Bifunctional arginine dihydrolase/ornithine cyclodeaminase AgrE (703 aa).

Residues 10–269 (CPPDHYDVDY…GAAKCLTLRV (260 aa)) form an arginine dihydrolase region. 5 residues coordinate L-arginine: asparagine 22, aspartate 65, asparagine 71, arginine 90, and arginine 139. L-ornithine is bound at residue asparagine 22. L-ornithine is bound by residues arginine 90, arginine 139, and histidine 168. Histidine 168 functions as the Proton donor/acceptor in the catalytic mechanism. Aspartate 170 and alanine 258 together coordinate L-arginine. Cysteine 264 serves as a coordination point for L-ornithine. Catalysis depends on cysteine 264, which acts as the Nucleophile. Residues 285–694 (SRIIRIEGHL…SLLTQQLDKL (410 aa)) form an ornithine cyclodeaminase region. NAD(+) contacts are provided by asparagine 524, alanine 525, aspartate 603, serine 635, methionine 636, leucine 637, histidine 638, aspartate 656, aspartate 679, and valine 680.

It in the N-terminal section; belongs to the DDAH family. In the C-terminal section; belongs to the AgrE/ArgZ ornithine cyclodeaminase family. As to quaternary structure, homotetramer. Requires NAD(+) as cofactor.

It catalyses the reaction L-arginine + 2 H2O + 2 H(+) = L-ornithine + 2 NH4(+) + CO2. It carries out the reaction L-ornithine = L-proline + NH4(+). Its activity is regulated as follows. Ornithine cyclodeaminase activity is inhibited by ATP. Bifunctional enzyme involved in a cyanobacterial arginine utilization pathway that produces glutamate and enables cellular adaptation to nitrogen fluctuations. Catalyzes the hydrolysis of arginine to ornithine, with the release of ammonia and carbon dioxide. Then, catalyzes the conversion of ornithine to proline, with the release of ammonia. This is Bifunctional arginine dihydrolase/ornithine cyclodeaminase AgrE from Nostoc sp. (strain PCC 7120 / SAG 25.82 / UTEX 2576).